The following is a 382-amino-acid chain: MIKSALLVLEDGTQFHGRAIGATGSAVGEVVFNTSMTGYQEILTDPSYSRQIVTLTYPHIGNVGTNKADEESSQVHAQGLVIRDLPLIASNFRNTEDLSSYLKRHNIVAIADIDTRKLTRLLREKGAQNGCIIAGDSPDAKLALEKAKAFPGLNGMDLAKEVTTAETYRWTQGSWTLKDGLPEAKSEDDLPFHVVAYDFGAKRNILRMLVDRGCRLTVVPAQTSAEEVLKMNPDGIFLSNGPGDPAPCDYAITAIQKFLETDIPLFGICLGHQLLALASGAKTVKMKFGHHGGNHPVKDMDRNVVMITAQNHGFAVDEDSLPANLRVTHKSLFDGTLQGIHRTDKPAFSFQGHPEASPGPHDAAPLFDHFIELIEQYRQSAK.

Residues 1–189 (MIKSALLVLE…GLPEAKSEDD (189 aa)) are CPSase. 3 residues coordinate L-glutamine: Ser-47, Gly-241, and Gly-243. Residues 193–380 (HVVAYDFGAK…IELIEQYRQS (188 aa)) enclose the Glutamine amidotransferase type-1 domain. Catalysis depends on Cys-269, which acts as the Nucleophile. Residues Leu-270, Gln-273, Asn-311, Gly-313, and Phe-314 each coordinate L-glutamine. Residues His-353 and Glu-355 contribute to the active site.

The protein belongs to the CarA family. As to quaternary structure, composed of two chains; the small (or glutamine) chain promotes the hydrolysis of glutamine to ammonia, which is used by the large (or ammonia) chain to synthesize carbamoyl phosphate. Tetramer of heterodimers (alpha,beta)4.

It carries out the reaction hydrogencarbonate + L-glutamine + 2 ATP + H2O = carbamoyl phosphate + L-glutamate + 2 ADP + phosphate + 2 H(+). It catalyses the reaction L-glutamine + H2O = L-glutamate + NH4(+). The protein operates within amino-acid biosynthesis; L-arginine biosynthesis; carbamoyl phosphate from bicarbonate: step 1/1. Its pathway is pyrimidine metabolism; UMP biosynthesis via de novo pathway; (S)-dihydroorotate from bicarbonate: step 1/3. In terms of biological role, small subunit of the glutamine-dependent carbamoyl phosphate synthetase (CPSase). CPSase catalyzes the formation of carbamoyl phosphate from the ammonia moiety of glutamine, carbonate, and phosphate donated by ATP, constituting the first step of 2 biosynthetic pathways, one leading to arginine and/or urea and the other to pyrimidine nucleotides. The small subunit (glutamine amidotransferase) binds and cleaves glutamine to supply the large subunit with the substrate ammonia. This Salmonella typhimurium (strain LT2 / SGSC1412 / ATCC 700720) protein is Carbamoyl phosphate synthase small chain.